The chain runs to 286 residues: MNEYFLLPLASLPFPNINPILIQIGPLAVHWYGVGYIVGILFAWWYAKRLAANPKLWPDGILPMKLEDLDDFIVWAAIGVVLGGRTGYVLFYDLPRYIAHPLDIFAVWQGGMSFHGGLLGVILAMTLFSIKRGIRTWSLFDVVAAGVPVGLGLVRVANFINSELWGRPTDVPWAIEFPNGGPFTRHPSQLYEALLEGLVLFVVLRILTHSRLKLKTPRFVGGAFICGYGLSRIFVEFFREPDQQLGYLLGTNWLTMGMILSTPMVLAGIWAMATAKPVKQAQPQAT.

7 helical membrane passes run 24-44 (IGPL…LFAW), 72-92 (FIVW…VLFY), 104-124 (IFAV…VILA), 140-160 (FDVV…ANFI), 190-210 (LYEA…LTHS), 218-238 (RFVG…VEFF), and 253-273 (WLTM…WAMA). Arg155 contacts a 1,2-diacyl-sn-glycero-3-phospho-(1'-sn-glycerol).

This sequence belongs to the Lgt family.

It localises to the cell inner membrane. The catalysed reaction is L-cysteinyl-[prolipoprotein] + a 1,2-diacyl-sn-glycero-3-phospho-(1'-sn-glycerol) = an S-1,2-diacyl-sn-glyceryl-L-cysteinyl-[prolipoprotein] + sn-glycerol 1-phosphate + H(+). Its pathway is protein modification; lipoprotein biosynthesis (diacylglyceryl transfer). In terms of biological role, catalyzes the transfer of the diacylglyceryl group from phosphatidylglycerol to the sulfhydryl group of the N-terminal cysteine of a prolipoprotein, the first step in the formation of mature lipoproteins. This Mesorhizobium japonicum (strain LMG 29417 / CECT 9101 / MAFF 303099) (Mesorhizobium loti (strain MAFF 303099)) protein is Phosphatidylglycerol--prolipoprotein diacylglyceryl transferase.